The following is a 266-amino-acid chain: Exosome complex component Rrp42 (266 aa).

The protein belongs to the RNase PH family. Rrp42 subfamily. Component of the archaeal exosome complex. Forms a hexameric ring-like arrangement composed of 3 Rrp41-Rrp42 heterodimers. The hexameric ring associates with a trimer of Rrp4 and/or Csl4 subunits.

The protein resides in the cytoplasm. In terms of biological role, non-catalytic component of the exosome, which is a complex involved in RNA degradation. Contributes to the structuring of the Rrp41 active site. This is Exosome complex component Rrp42 from Methanosarcina acetivorans (strain ATCC 35395 / DSM 2834 / JCM 12185 / C2A).